The chain runs to 310 residues: Olfactory receptor 4D1 (310 aa).

Residues 1-25 (MEPQNTTQVSMFVLLGFSQTQELQK) are Extracellular-facing. Asn-5 is a glycosylation site (N-linked (GlcNAc...) asparagine). The chain crosses the membrane as a helical span at residues 26–49 (FLFLLFLLVYVTTIVGNLLIMVTV). The Cytoplasmic segment spans residues 50 to 57 (TFDCRLHT). The chain crosses the membrane as a helical span at residues 58-79 (PMYFLLRNLALIDLCYSTVTSP). The Extracellular segment spans residues 80-100 (KMLVDFLHETKTISYQGCMAQ). Cys-97 and Cys-189 are disulfide-bonded. The chain crosses the membrane as a helical span at residues 101–120 (IFFFHLLGGGTVFFLSVMAY). Residues 121 to 139 (DRYIAISQPLRYVTIMNTQ) lie on the Cytoplasmic side of the membrane. The chain crosses the membrane as a helical span at residues 140–158 (LCVGLVVAAWVGGFVHSIV). Residues 159 to 195 (QLALILPLPFCGPNILDNFYCDVPQVLRLACTDTSLL) lie on the Extracellular side of the membrane. Residues 196 to 219 (EFLMISNSGLLVIIWFLLLLISYT) form a helical membrane-spanning segment. The Cytoplasmic segment spans residues 220–235 (VILVMLRSHSGKARRK). The helical transmembrane segment at 236-258 (AASTCTTHIIVVSMIFIPCIYIY) threads the bilayer. At 259-269 (TWPFTPFLMDK) the chain is on the extracellular side. A helical membrane pass occupies residues 270-289 (AVSISYTVMTPMLNPMIYTL). Residues 290–310 (RNQDMKAAMRRLGKCLVICRE) are Cytoplasmic-facing.

It belongs to the G-protein coupled receptor 1 family.

The protein resides in the cell membrane. Functionally, odorant receptor. The sequence is that of Olfactory receptor 4D1 (OR4D1) from Homo sapiens (Human).